Here is a 193-residue protein sequence, read N- to C-terminus: Peptidyl-tRNA hydrolase (193 aa).

Position 16 (Y16) interacts with tRNA. Residue H21 is the Proton acceptor of the active site. F67, N69, and N115 together coordinate tRNA.

It belongs to the PTH family. As to quaternary structure, monomer.

The protein localises to the cytoplasm. It catalyses the reaction an N-acyl-L-alpha-aminoacyl-tRNA + H2O = an N-acyl-L-amino acid + a tRNA + H(+). Functionally, hydrolyzes ribosome-free peptidyl-tRNAs (with 1 or more amino acids incorporated), which drop off the ribosome during protein synthesis, or as a result of ribosome stalling. Catalyzes the release of premature peptidyl moieties from peptidyl-tRNA molecules trapped in stalled 50S ribosomal subunits, and thus maintains levels of free tRNAs and 50S ribosomes. This Psychrobacter cryohalolentis (strain ATCC BAA-1226 / DSM 17306 / VKM B-2378 / K5) protein is Peptidyl-tRNA hydrolase.